We begin with the raw amino-acid sequence, 61 residues long: Large ribosomal subunit protein uL30 (61 aa).

The protein belongs to the universal ribosomal protein uL30 family. As to quaternary structure, part of the 50S ribosomal subunit.

This Chlorobium limicola (strain DSM 245 / NBRC 103803 / 6330) protein is Large ribosomal subunit protein uL30.